Reading from the N-terminus, the 166-residue chain is Short form salivary protein D7R1 (166 aa).

An N-terminal signal peptide occupies residues 1–21 (MFRKVFSVALVTCGLLVIVQA).

It belongs to the PBP/GOBP family. As to quaternary structure, interacts with host coagulation factor XII (F12) (inactive and activated) (via amino acids 1-77). Interacts with host high molecular weight kininogen (KNG1) (via amino acids 402-532). Female salivary gland (at protein level).

Its subcellular location is the secreted. With respect to regulation, zn(2+) modulates binding to host coagulation factor XII (F12) and high molecular weight kininogen (KNG1). Salivary protein with anticoagulant activity that targets the intrinsic blood coagulation pathway in the host. Inhibits activation of the host plasma contact system by preventing the reciprocal activation of host coagulation factor XII (F12) and prekallikrein (KLKB1). Attenuates generation of bradykinin in host plasma. May bind and sequester different mediators involved in the host response, such as serotonin and histamine. In Anopheles stephensi (Indo-Pakistan malaria mosquito), this protein is Short form salivary protein D7R1.